The chain runs to 145 residues: uncharacterized protein (145 aa).

The tract at residues 1-25 (MSENNENDGFNLDPDVKEELEETKS) is disordered. The span at 14–25 (PDVKEELEETKS) shows a compositional bias: basic and acidic residues.

This is an uncharacterized protein from His1 virus (isolate Australia/Victoria) (His1V).